Reading from the N-terminus, the 436-residue chain is GTPase Der (436 aa).

EngA-type G domains are found at residues 4–167 and 176–351; these read PVVA…PKDH and IKFC…DNHA. GTP-binding positions include 10–17, 57–61, 119–122, 182–189, 229–233, and 294–297; these read GRPNVGKS, DTGGI, NKID, DTAGM, and NKWD. One can recognise a KH-like domain in the interval 352-436; the sequence is MRVQTNVLNE…PIKIIARPRK (85 aa).

This sequence belongs to the TRAFAC class TrmE-Era-EngA-EngB-Septin-like GTPase superfamily. EngA (Der) GTPase family. In terms of assembly, associates with the 50S ribosomal subunit.

GTPase that plays an essential role in the late steps of ribosome biogenesis. This chain is GTPase Der, found in Geobacillus thermodenitrificans (strain NG80-2).